We begin with the raw amino-acid sequence, 886 residues long: Vam6/Vps39-like protein (886 aa).

The 280-residue stretch at P15–I294 folds into the CNH domain. A CHCR repeat occupies F573–S750.

This sequence belongs to the VAM6/VPS39 family. As to quaternary structure, homooligomer. Interacts with TGFBR2 and, less efficiently, with TGFBR1; interaction with TGFBR2 is independent of the receptor kinase activity and of the presence of TGF-beta. Also interacts with ACVR2B, but not with BMPR2. Interacts with SMAD4, preferentially following TGF-beta treatment. Component of the putative homotypic fusion and vacuole protein sorting (HOPS) complex; the core of which composed of the class C Vps proteins VPS11, VPS16, VPS18 and VPS33A, is associated with VPS39 and VPS41. Interacts with PLEKHM2; involved in VPS39 recruitment to ARL8B-containing lysosomes. Associates with adapter protein complex 3 (AP-3) and clathrin:AP-3 complexes. Interacts with STX17; this interaction is increased in the absence of TMEM39A. Interacts with RAB7, RAB2A and RAB2B. Interacts with RAB2A (GTP-bound); the interaction contributes to obtaining a functional HOPS complex that promotes autophagosome-lysosome membrane fusion driven by STX17-SNAP29-VAMP8. Interacts with RAB39A (GTP-bound) and RAB39B (GTP-bound); interaction with RAB39A contributes to obtaining a functional HOPS complex.

The protein resides in the cytoplasm. The protein localises to the lysosome membrane. It localises to the late endosome membrane. Regulator of TGF-beta/activin signaling, inhibiting SMAD3- and activating SMAD2-dependent transcription. Acts by interfering with SMAD3/SMAD4 complex formation, this would lead to inhibition of SMAD3-dependent transcription and relieve SMAD3 inhibition of SMAD2-dependent promoters, thus increasing SMAD2-dependent transcription. In terms of biological role, plays a role in vesicle-mediated protein trafficking to lysosomal compartments including the endocytic membrane transport and autophagic pathways. Acts as a component of the HOPS endosomal tethering complex which is proposed to be involved in the Rab5-to-Rab7 endosome conversion probably implicating MON1A/B, and via binding SNAREs and SNARE complexes to mediate tethering and docking events during SNARE-mediated membrane fusion. The HOPS complex is proposed to be recruited to Rab7 on the late endosomal membrane and to regulate late endocytic, phagocytic and autophagic traffic towards lysosomes. Involved in homotypic vesicle fusions between late endosomes and in heterotypic fusions between late endosomes and lysosomes. Required for fusion of endosomes and autophagosomes with lysosomes. The polypeptide is Vam6/Vps39-like protein (Mus musculus (Mouse)).